Here is a 354-residue protein sequence, read N- to C-terminus: Rhodopsin (354 aa).

The Extracellular segment spans residues 1–36; that stretch reads MNGTEGENFYVPMSNKTGVVRSPFDYPQYYLGEPWM. Asparagine 2 and asparagine 15 each carry an N-linked (GlcNAc...) asparagine glycan. A helical membrane pass occupies residues 37–61; the sequence is FSALAAYMFFLILTGLPVNFLTLFV. Residues 62 to 73 are Cytoplasmic-facing; that stretch reads TIQHKKLRQPLN. The chain crosses the membrane as a helical span at residues 74–96; sequence YILLNLAVSDLFMVFGGFTTTII. Topologically, residues 97–110 are extracellular; that stretch reads TSMNGYFIFGPAGC. A disulfide bridge links cysteine 110 with cysteine 187. The helical transmembrane segment at 111–133 threads the bilayer; that stretch reads NFEGFFATLGGEVGLWCLVVLAI. The 'Ionic lock' involved in activated form stabilization motif lies at 134–136; it reads ERY. The Cytoplasmic segment spans residues 134-152; sequence ERYMVVCKPMANFRFGSQH. Residues 153-173 form a helical membrane-spanning segment; the sequence is AIIGVVFTWIMALSCAGPPLV. Over 174 to 202 the chain is Extracellular; sequence GWSRYIPEGLQCSCGVDYYTMKPEVNNES. Residues 203 to 224 traverse the membrane as a helical segment; the sequence is FVIYMFVVHFTIPLIVIFFCYG. Over 225-252 the chain is Cytoplasmic; the sequence is RLVCTVKEAAAQQQESESTQRAEREVTR. A helical membrane pass occupies residues 253–274; the sequence is MVIIMVVAFLICWVPYASVAFY. Residues 275–286 lie on the Extracellular side of the membrane; sequence IFINQGCDFTPF. A helical membrane pass occupies residues 287–308; that stretch reads FMTVPAFFAKSSAVYNPLIYIL. Position 296 is an N6-(retinylidene)lysine (lysine 296). At 309 to 354 the chain is on the cytoplasmic side; it reads MNKQFRNCMITTICLGKNPFEEEESTSASASKTEASSVSSSQVAPA. A lipid anchor (S-palmitoyl cysteine) is attached at cysteine 322. The disordered stretch occupies residues 333–354; that stretch reads STSASASKTEASSVSSSQVAPA. The segment covering 334 to 354 has biased composition (low complexity); sequence TSASASKTEASSVSSSQVAPA.

Belongs to the G-protein coupled receptor 1 family. Opsin subfamily. Phosphorylated on some or all of the serine and threonine residues present in the C-terminal region. In terms of processing, contains one covalently linked retinal chromophore.

It is found in the membrane. It localises to the cell projection. Its subcellular location is the cilium. The protein localises to the photoreceptor outer segment. Functionally, photoreceptor required for image-forming vision at low light intensity. While most salt water fish species use retinal as chromophore, most freshwater fish use 3-dehydroretinal, or a mixture of retinal and 3-dehydroretinal. Light-induced isomerization of 11-cis to all-trans retinal triggers a conformational change that activates signaling via G-proteins. Subsequent receptor phosphorylation mediates displacement of the bound G-protein alpha subunit by arrestin and terminates signaling. The sequence is that of Rhodopsin (rho) from Leucoraja erinaceus (Little skate).